The chain runs to 162 residues: MHLADLIETTLSGMGYELVELERAPAGLLRVYIDQPETGIAIEDCEKVSRQLTHVFTVENVDYERLEVSSPGLDRPLKKLADYVRFAGEEARVTLRLPVNGQKNFTGILREPTGAAGEEKIGLEFEGKDGPALLEFAVSDVDKARLVPVIDFKGNQRKGNKQ.

It belongs to the RimP family.

It localises to the cytoplasm. In terms of biological role, required for maturation of 30S ribosomal subunits. The chain is Ribosome maturation factor RimP from Cupriavidus necator (strain ATCC 17699 / DSM 428 / KCTC 22496 / NCIMB 10442 / H16 / Stanier 337) (Ralstonia eutropha).